Here is a 290-residue protein sequence, read N- to C-terminus: Putative beta-lactamase HcpC (290 aa).

An N-terminal signal peptide occupies residues 1-25 (MLENVKKSLFRVLCLGALCLGGLMA). 7 TPR repeats span residues 29–62 (PKEL…KENS), 64–98 (CFNL…NYSN), 100–133 (CHLL…LKYA), 134–170 (EGCA…NDGD), 172–205 (CTIL…LKDS), 206–242 (PGCF…ENGG), and 244–278 (CFNL…GAKG). 7 disulfides stabilise this stretch: Cys56–Cys64, Cys92–Cys100, Cys128–Cys136, Cys164–Cys172, Cys200–Cys208, Cys236–Cys244, and Cys272–Cys280.

The protein belongs to the hcp beta-lactamase family.

The protein resides in the secreted. It carries out the reaction a beta-lactam + H2O = a substituted beta-amino acid. Its function is as follows. May hydrolyze 6-aminopenicillinic acid and 7-aminocephalosporanic acid (ACA) derivatives. This Helicobacter pylori (strain J99 / ATCC 700824) (Campylobacter pylori J99) protein is Putative beta-lactamase HcpC (hcpC).